The primary structure comprises 376 residues: General transcription factor IIH subunit 2 (376 aa).

The VWFA domain occupies 64-206 (HVMIVIDCSR…NIRCSAIGLS (143 aa)). The C4-type zinc-finger motif lies at 286 to 303 (CTQCGARHCSIPAECPVC).

Belongs to the GTF2H2 family. Component of the 7-subunit TFIIH core complex composed of xpb-1, xpd-1, gtf-2H1, gtf-2H2C, gtf-2H3, Y73F8A.24 and gtf-2H5, which is active in NER. The core complex associates with the 3-subunit CDK-activating kinase (CAK) module composed of cyh-1, cdk-7 and mnat-1 to form the 10-subunit holoenzyme (holo-TFIIH) active in transcription.

It localises to the nucleus. In terms of biological role, component of the general transcription and DNA repair factor IIH (TFIIH) core complex, which is involved in general and transcription-coupled nucleotide excision repair (NER) of damaged DNA and, when complexed to CAK, in RNA transcription by RNA polymerase II. In NER, TFIIH acts by opening DNA around the lesion to allow the excision of the damaged oligonucleotide and its replacement by a new DNA fragment. In transcription, TFIIH has an essential role in transcription initiation. When the pre-initiation complex (PIC) has been established, TFIIH is required for promoter opening and promoter escape. Phosphorylation of the C-terminal tail (CTD) of the largest subunit of RNA polymerase II by the kinase module CAK controls the initiation of transcription. This chain is General transcription factor IIH subunit 2, found in Caenorhabditis elegans.